Reading from the N-terminus, the 197-residue chain is RNA pyrophosphohydrolase (197 aa).

One can recognise a Nudix hydrolase domain in the interval 6-149 (GYRPNVGIVI…KRDVYRKAMK (144 aa)). The short motif at 38-59 (GGINDGETPEQAMYRELYEEVG) is the Nudix box element. The tract at residues 165–197 (LSTNNNDEKKANYSAKKPYSPYRNQDKKRKTRV) is disordered.

It belongs to the Nudix hydrolase family. RppH subfamily. Requires a divalent metal cation as cofactor.

Its function is as follows. Accelerates the degradation of transcripts by removing pyrophosphate from the 5'-end of triphosphorylated RNA, leading to a more labile monophosphorylated state that can stimulate subsequent ribonuclease cleavage. In Mannheimia succiniciproducens (strain KCTC 0769BP / MBEL55E), this protein is RNA pyrophosphohydrolase.